A 297-amino-acid chain; its full sequence is MGMDRIADRAIIDGKRFAAGLLDDITARVKKLEEETGQVPGLAVVLVGEDPASRVYVGSKHRQTLAAGIASFKYELPAETTQEELMALIDRLNVDPAVHGILVQLPLPAHLDANAVIQEINPNKDVDGFHISNAGRLATGQPAFVPCTPLGCLLLLKDRLGANLSGLHAVVLGKSNIVGRPMVQLLLAESCTVTIAHSRTRNAPELCREADILIVAVGRPGLVRGDWIKPGAVVIDVGINRVEAEGKSRIVGDVAFEEAGHAGAITPVPGGVGPMTIACLLSNTLTAFCRQHAVNID.

NADP(+) contacts are provided by residues 173 to 175, Ser-198, and Ile-239; that span reads GKS.

It belongs to the tetrahydrofolate dehydrogenase/cyclohydrolase family. Homodimer.

It carries out the reaction (6R)-5,10-methylene-5,6,7,8-tetrahydrofolate + NADP(+) = (6R)-5,10-methenyltetrahydrofolate + NADPH. It catalyses the reaction (6R)-5,10-methenyltetrahydrofolate + H2O = (6R)-10-formyltetrahydrofolate + H(+). It participates in one-carbon metabolism; tetrahydrofolate interconversion. Its function is as follows. Catalyzes the oxidation of 5,10-methylenetetrahydrofolate to 5,10-methenyltetrahydrofolate and then the hydrolysis of 5,10-methenyltetrahydrofolate to 10-formyltetrahydrofolate. The polypeptide is Bifunctional protein FolD 2 (Sinorhizobium medicae (strain WSM419) (Ensifer medicae)).